Reading from the N-terminus, the 340-residue chain is Phosphoribosylformylglycinamidine cyclo-ligase (340 aa).

It belongs to the AIR synthase family.

It localises to the cytoplasm. It carries out the reaction 2-formamido-N(1)-(5-O-phospho-beta-D-ribosyl)acetamidine + ATP = 5-amino-1-(5-phospho-beta-D-ribosyl)imidazole + ADP + phosphate + H(+). The protein operates within purine metabolism; IMP biosynthesis via de novo pathway; 5-amino-1-(5-phospho-D-ribosyl)imidazole from N(2)-formyl-N(1)-(5-phospho-D-ribosyl)glycinamide: step 2/2. The sequence is that of Phosphoribosylformylglycinamidine cyclo-ligase from Streptococcus uberis (strain ATCC BAA-854 / 0140J).